Reading from the N-terminus, the 155-residue chain is 2-C-methyl-D-erythritol 2,4-cyclodiphosphate synthase (155 aa).

Residues D8 and H10 each contribute to the a divalent metal cation site. 4-CDP-2-C-methyl-D-erythritol 2-phosphate is bound by residues 8–10 and 34–35; these read DVH and HS. An a divalent metal cation-binding site is contributed by H42. 4-CDP-2-C-methyl-D-erythritol 2-phosphate-binding positions include 56 to 58, 61 to 65, 100 to 106, 132 to 135, F139, and R142; these read DIG, FPDTD, AQAPKMA, and TTTE.

It belongs to the IspF family. As to quaternary structure, homotrimer. A divalent metal cation is required as a cofactor.

It catalyses the reaction 4-CDP-2-C-methyl-D-erythritol 2-phosphate = 2-C-methyl-D-erythritol 2,4-cyclic diphosphate + CMP. Its pathway is isoprenoid biosynthesis; isopentenyl diphosphate biosynthesis via DXP pathway; isopentenyl diphosphate from 1-deoxy-D-xylulose 5-phosphate: step 4/6. Its function is as follows. Involved in the biosynthesis of isopentenyl diphosphate (IPP) and dimethylallyl diphosphate (DMAPP), two major building blocks of isoprenoid compounds. Catalyzes the conversion of 4-diphosphocytidyl-2-C-methyl-D-erythritol 2-phosphate (CDP-ME2P) to 2-C-methyl-D-erythritol 2,4-cyclodiphosphate (ME-CPP) with a corresponding release of cytidine 5-monophosphate (CMP). The sequence is that of 2-C-methyl-D-erythritol 2,4-cyclodiphosphate synthase from Saccharophagus degradans (strain 2-40 / ATCC 43961 / DSM 17024).